Reading from the N-terminus, the 123-residue chain is Small ribosomal subunit protein uS12 (123 aa).

Asp89 carries the 3-methylthioaspartic acid modification.

It belongs to the universal ribosomal protein uS12 family. In terms of assembly, part of the 30S ribosomal subunit. Contacts proteins S8 and S17. May interact with IF1 in the 30S initiation complex.

In terms of biological role, with S4 and S5 plays an important role in translational accuracy. Functionally, interacts with and stabilizes bases of the 16S rRNA that are involved in tRNA selection in the A site and with the mRNA backbone. Located at the interface of the 30S and 50S subunits, it traverses the body of the 30S subunit contacting proteins on the other side and probably holding the rRNA structure together. The combined cluster of proteins S8, S12 and S17 appears to hold together the shoulder and platform of the 30S subunit. The chain is Small ribosomal subunit protein uS12 from Orientia tsutsugamushi (strain Ikeda) (Rickettsia tsutsugamushi).